Here is a 273-residue protein sequence, read N- to C-terminus: Elongation factor Ts (273 aa).

The involved in Mg(2+) ion dislocation from EF-Tu stretch occupies residues 79-82 (TDFV).

It belongs to the EF-Ts family.

It localises to the cytoplasm. Associates with the EF-Tu.GDP complex and induces the exchange of GDP to GTP. It remains bound to the aminoacyl-tRNA.EF-Tu.GTP complex up to the GTP hydrolysis stage on the ribosome. The sequence is that of Elongation factor Ts from Hydrogenobaculum sp. (strain Y04AAS1).